The following is a 77-amino-acid chain: Teretoxin Tsu15.4 (77 aa).

A signal peptide spans 1–21 (MTKLTVLLLAILVLLPLATSN). Residues 22–40 (SAADEALASLSGLLRRAKR) constitute a propeptide that is removed on maturation.

Post-translationally, contains 4 disulfide bonds. In terms of tissue distribution, expressed by the venom duct.

It localises to the secreted. In Terebra subulata (Chocolate spotted auger), this protein is Teretoxin Tsu15.4.